The primary structure comprises 189 residues: UPF0301 protein PSPA7_0505 (189 aa).

This sequence belongs to the UPF0301 (AlgH) family.

The sequence is that of UPF0301 protein PSPA7_0505 from Pseudomonas paraeruginosa (strain DSM 24068 / PA7) (Pseudomonas aeruginosa (strain PA7)).